We begin with the raw amino-acid sequence, 300 residues long: Tyrosine recombinase XerC (300 aa).

The Core-binding (CB) domain occupies 2-88 (IQEGKLEQQF…SLRSFYTFLL (87 aa)). The 186-residue stretch at 109-294 (RLPKFFYSEE…TKEHLKSTYM (186 aa)) folds into the Tyr recombinase domain. Catalysis depends on residues R150, K174, H246, R249, and H272. Y281 functions as the O-(3'-phospho-DNA)-tyrosine intermediate in the catalytic mechanism.

The protein belongs to the 'phage' integrase family. XerC subfamily. In terms of assembly, forms a cyclic heterotetrameric complex composed of two molecules of XerC and two molecules of XerD.

It is found in the cytoplasm. Its function is as follows. Site-specific tyrosine recombinase, which acts by catalyzing the cutting and rejoining of the recombining DNA molecules. The XerC-XerD complex is essential to convert dimers of the bacterial chromosome into monomers to permit their segregation at cell division. It also contributes to the segregational stability of plasmids. This Listeria monocytogenes serotype 4b (strain F2365) protein is Tyrosine recombinase XerC.